Reading from the N-terminus, the 239-residue chain is MAAAKKPRVVLLDIEGTVCPISFVKDVLFPYALSALPSTLAQEWDAPAFARYRAAFPAEHASTPSALAAHARDLMARDVKIGYLKALQGYLWEAGYASGALRAPLFEDVAPKVREWTSAAGEEGGVARVMIYSSGSVPAQKLLFRHTSGEPADLTDAITDYFDTVNAGPKTEPASYERIAAKYPEVPAGEWLFLSDNVREVEAAREAGMRACVVQRPGNAELPEDVRGRLEVVESFEEL.

Mg(2+) is bound by residues Asp13 and Glu15. Substrate contacts are provided by residues 133–134 (SS) and Lys170. Asp196 contacts Mg(2+).

It belongs to the HAD-like hydrolase superfamily. MasA/MtnC family. In terms of assembly, monomer. It depends on Mg(2+) as a cofactor.

Its subcellular location is the cytoplasm. It localises to the nucleus. The catalysed reaction is 5-methylsulfanyl-2,3-dioxopentyl phosphate + H2O = 1,2-dihydroxy-5-(methylsulfanyl)pent-1-en-3-one + phosphate. It functions in the pathway amino-acid biosynthesis; L-methionine biosynthesis via salvage pathway; L-methionine from S-methyl-5-thio-alpha-D-ribose 1-phosphate: step 3/6. The protein operates within amino-acid biosynthesis; L-methionine biosynthesis via salvage pathway; L-methionine from S-methyl-5-thio-alpha-D-ribose 1-phosphate: step 4/6. Its function is as follows. Bifunctional enzyme that catalyzes the enolization of 2,3-diketo-5-methylthiopentyl-1-phosphate (DK-MTP-1-P) into the intermediate 2-hydroxy-3-keto-5-methylthiopentenyl-1-phosphate (HK-MTPenyl-1-P), which is then dephosphorylated to form the acireductone 1,2-dihydroxy-3-keto-5-methylthiopentene (DHK-MTPene). In Chaetomium globosum (strain ATCC 6205 / CBS 148.51 / DSM 1962 / NBRC 6347 / NRRL 1970) (Soil fungus), this protein is Enolase-phosphatase E1.